We begin with the raw amino-acid sequence, 331 residues long: Flavonol synthase 1 (331 aa).

One can recognise a Fe2OG dioxygenase domain in the interval Asp-191–Pro-292. Fe cation is bound by residues His-217, Asp-219, and His-273. Arg-283 contacts 2-oxoglutarate.

This sequence belongs to the iron/ascorbate-dependent oxidoreductase family. Requires L-ascorbate as cofactor. It depends on Fe(2+) as a cofactor. As to expression, expressed in young cromes.

The catalysed reaction is a (2R,3R)-dihydroflavonol + 2-oxoglutarate + O2 = a flavonol + succinate + CO2 + H2O. The enzyme catalyses (2R,3R)-dihydrokaempferol + 2-oxoglutarate + O2 = kaempferol + succinate + CO2 + H2O + H(+). It carries out the reaction (2R,3R)-dihydroquercetin + 2-oxoglutarate + O2 = quercetin + succinate + CO2 + H2O + H(+). It catalyses the reaction (2R,3R)-dihydromyricetin + 2-oxoglutarate + O2 = myricetin + succinate + CO2 + H2O + H(+). Its pathway is flavonoid metabolism. Its function is as follows. Catalyzes the formation of flavonols from dihydroflavonols. Can act on dihydrokaempferol to produce kaempferol, on dihydroquercetin to produce quercitin and on dihydromyricetin to produce myricetin. The chain is Flavonol synthase 1 from Crocosmia x crocosmiiflora (Montbretia).